The following is a 309-amino-acid chain: Oxidoreductase NAD-binding domain-containing protein 1 (309 aa).

The N-terminal stretch at 1–14 is a signal peptide; the sequence is MVVVIPRLLRGSLG. The region spanning 47-161 is the FAD-binding FR-type domain; that stretch reads HLERTADVVR…VGGEFFFDPK (115 aa). 175–180 contacts NAD(+); it reads GVGINP.

The sequence is that of Oxidoreductase NAD-binding domain-containing protein 1 (OXNAD1) from Bos taurus (Bovine).